Here is a 91-residue protein sequence, read N- to C-terminus: Small ribosomal subunit protein uS19 (91 aa).

It belongs to the universal ribosomal protein uS19 family.

In terms of biological role, protein S19 forms a complex with S13 that binds strongly to the 16S ribosomal RNA. The polypeptide is Small ribosomal subunit protein uS19 (Synechococcus sp. (strain WH7803)).